The primary structure comprises 350 residues: Purine-rich element-binding protein gamma (350 aa).

Disordered stretches follow at residues 1–59 (MERA…GTSE) and 136–172 (GHRQ…HPHS). Residues 9-27 (GGGSGGGRGRGGKNVGGPG) show a composition bias toward gly residues. Over residues 47–59 (ASATPNQSGGTSE) the composition is skewed to polar residues. A DNA-binding region spans residues 54–296 (SGGTSEIQEL…GIFLKVSEVR (243 aa)). Residues 137-149 (HRQEHGQSKEQVS) are compositionally biased toward basic and acidic residues. Phosphoserine occurs at positions 163, 166, and 342.

This sequence belongs to the PUR DNA-binding protein family. Isoform 1 is expressed in testis. Isoform 2 is expressed in blastocyst and kidney.

It is found in the nucleus. The chain is Purine-rich element-binding protein gamma (Purg) from Mus musculus (Mouse).